Reading from the N-terminus, the 1427-residue chain is Multidrug resistance-associated protein 5 (1427 aa).

Over 1 to 147 (MPSDSEEVCL…IYRFISTRLW (147 aa)) the chain is Cytoplasmic. A helical transmembrane segment spans residues 148–168 (FSCAVFFFCLIFGFIGPTCFI). The ABC transmembrane type-1 1 domain maps to 151-432 (AVFFFCLIFG…IPYGSRYLAE (282 aa)). Topologically, residues 169–185 (RRLIAFAENPERDEQSR) are extracellular. Residues 186-206 (IVYSYGIALVAAISVVEFARV) form a helical membrane-spanning segment. The Cytoplasmic segment spans residues 207-268 (LSYGATWAVS…RLFDAVTFAP (62 aa)). Residues 269–289 (LVLVGPLVLVGGIGYLLMVIG) form a helical membrane-spanning segment. Position 290 (arginine 290) is a topological domain, extracellular. Residues 291-311 (WSLLGILVFFVFDVIQFGLGK) traverse the membrane as a helical segment. Over 312-375 (SMVACRNLAI…RKSGYAQSLA (64 aa)) the chain is Cytoplasmic. The helical transmembrane segment at 376-396 (IACGPVVPVVAAILTFVGVVL) threads the bilayer. The Extracellular segment spans residues 397–399 (AGN). A helical membrane pass occupies residues 400–420 (DLLASDAFSAITVYFVMLFGI). The Cytoplasmic portion of the chain corresponds to 421–770 (RMIPYGSRYL…TIAWRIYKQY (350 aa)). The 222-residue stretch at 486 to 707 (PTENEVIVVE…NDAYKTFVDA (222 aa)) folds into the ABC transporter 1 domain. 518–525 (GAVGCGKS) lines the ATP pocket. A helical transmembrane segment spans residues 771–791 (IHAAGGWPIWTCLVIGFIVNV). One can recognise an ABC transmembrane type-1 2 domain in the interval 783-1078 (LVIGFIVNVV…AVRTQTELEA (296 aa)). At 792 to 833 (VSNIFSTYWLSRWLKKGHDETTTITNGTEFLEMKTSLADSPV) the chain is on the extracellular side. Asparagine 817 is a glycosylation site (N-linked (GlcNAc...) asparagine). Residues 834-854 (TGFYAAVYLVALVVLTISGLF) traverse the membrane as a helical segment. Residues 855 to 909 (KACVFVKVSLTAATRLHDRMFQAVIHGATSFFDSTPTGRILNRFSKDMDEIDVKL) lie on the Cytoplasmic side of the membrane. Residues 910–930 (PFTAEVFLQNMITCLGFLVVI) form a helical membrane-spanning segment. Position 931 (threonine 931) is a topological domain, extracellular. Residues 932–952 (SVFPYFLLFAIPLFVVFVVFV) form a helical membrane-spanning segment. Residues 953–1022 (SCFRAGIRNL…MFQSAMRWLA (70 aa)) lie on the Cytoplasmic side of the membrane. Residues 1023 to 1043 (VWLDLLVVVMTAIVALLTVML) form a helical membrane-spanning segment. Over 1044-1049 (TGTVSP) the chain is Extracellular. The chain crosses the membrane as a helical span at residues 1050 to 1070 (ADAGMAIAFAVQMSGIFQFAV). Residues 1071-1427 (RTQTELEAKM…SSDTDIEVVQ (357 aa)) are Cytoplasmic-facing. The ABC transporter 2 domain occupies 1117–1351 (INFSEVNLRY…DWSVYKLEDK (235 aa)). Residue 1151–1158 (GRTGSGKS) coordinates ATP. The segment at 1361 to 1427 (VGENSEHSME…SSDTDIEVVQ (67 aa)) is disordered. Over residues 1382-1418 (DIVKVENEQKDSSDDVVHIESGDDDVKADSSEVKETS) the composition is skewed to basic and acidic residues.

Belongs to the ABC transporter superfamily. ABCC family. Conjugate transporter (TC 3.A.1.208) subfamily. As to expression, highly expressed in the intestine and pharynx. Expressed at low levels in the hypodermis and in some neurons.

It localises to the basolateral cell membrane. Heme transporter required for the export of intestinal heme to different tissues and subcellular compartments. Also, required for the export of vitamin B12 from the intestine of the mother to the embryo to support embryonic development. In Caenorhabditis elegans, this protein is Multidrug resistance-associated protein 5.